The primary structure comprises 143 residues: 3-hydroxyacyl-[acyl-carrier-protein] dehydratase FabZ (143 aa).

Histidine 49 is a catalytic residue.

It belongs to the thioester dehydratase family. FabZ subfamily.

The protein resides in the cytoplasm. It carries out the reaction a (3R)-hydroxyacyl-[ACP] = a (2E)-enoyl-[ACP] + H2O. Involved in unsaturated fatty acids biosynthesis. Catalyzes the dehydration of short chain beta-hydroxyacyl-ACPs and long chain saturated and unsaturated beta-hydroxyacyl-ACPs. The chain is 3-hydroxyacyl-[acyl-carrier-protein] dehydratase FabZ from Ehrlichia chaffeensis (strain ATCC CRL-10679 / Arkansas).